Here is a 424-residue protein sequence, read N- to C-terminus: Serpin-Z2A (424 aa).

The RCL stretch occupies residues 370–394 (GTEAAASTACTIRLLSMSYPEDFVA).

This sequence belongs to the serpin family.

Functionally, probable serine protease inhibitor. The polypeptide is Serpin-Z2A (Oryza sativa subsp. japonica (Rice)).